The primary structure comprises 264 residues: Somatomedin-B and thrombospondin type-1 domain-containing protein (264 aa).

A signal peptide spans 1 to 20 (MKTLWMVLCALARLWPGALA). The 52-residue stretch at 24-75 (EAGRCCPGRDPACFARGWRLDRVYGTCFCDQACRLTGDCCFDYDRACPARPC) folds into the SMB domain. Disulfide bonds link Cys28/Cys36, Cys28/Cys52, Cys36/Cys70, Cys50/Cys52, Cys50/Cys63, Cys56/Cys62, and Cys63/Cys70. A TSP type-1 domain is found at 74–125 (PCFVGEWSPWSGCAGQCQPTTRVRRRSVRQEPLNGGAPCPPLEERAGCLEYS). N-linked (GlcNAc...) asparagine glycosylation is present at Asn227.

This sequence belongs to the thrombospondin family.

Its subcellular location is the secreted. It localises to the extracellular space. The protein resides in the extracellular matrix. In Mus musculus (Mouse), this protein is Somatomedin-B and thrombospondin type-1 domain-containing protein (Sbspon).